Reading from the N-terminus, the 367-residue chain is tRNA/tmRNA (uracil-C(5))-methyltransferase (367 aa).

Residues Q189, Y217, N222, E238, and D298 each coordinate S-adenosyl-L-methionine. The active-site Nucleophile is C323. E357 functions as the Proton acceptor in the catalytic mechanism.

It belongs to the class I-like SAM-binding methyltransferase superfamily. RNA M5U methyltransferase family. TrmA subfamily.

The catalysed reaction is uridine(54) in tRNA + S-adenosyl-L-methionine = 5-methyluridine(54) in tRNA + S-adenosyl-L-homocysteine + H(+). It catalyses the reaction uridine(341) in tmRNA + S-adenosyl-L-methionine = 5-methyluridine(341) in tmRNA + S-adenosyl-L-homocysteine + H(+). Functionally, dual-specificity methyltransferase that catalyzes the formation of 5-methyluridine at position 54 (m5U54) in all tRNAs, and that of position 341 (m5U341) in tmRNA (transfer-mRNA). The chain is tRNA/tmRNA (uracil-C(5))-methyltransferase from Pseudoalteromonas translucida (strain TAC 125).